The following is a 175-amino-acid chain: Acireductone dioxygenase (175 aa).

Fe(2+) contacts are provided by His81, His83, Glu87, and His126. Residues His81, His83, Glu87, and His126 each contribute to the Ni(2+) site.

The protein belongs to the acireductone dioxygenase (ARD) family. Fe(2+) serves as cofactor. It depends on Ni(2+) as a cofactor.

Its subcellular location is the cytoplasm. It localises to the nucleus. It catalyses the reaction 1,2-dihydroxy-5-(methylsulfanyl)pent-1-en-3-one + O2 = 4-methylsulfanyl-2-oxobutanoate + formate + 2 H(+). The catalysed reaction is 1,2-dihydroxy-5-(methylsulfanyl)pent-1-en-3-one + O2 = 3-(methylsulfanyl)propanoate + CO + formate + 2 H(+). It functions in the pathway amino-acid biosynthesis; L-methionine biosynthesis via salvage pathway; L-methionine from S-methyl-5-thio-alpha-D-ribose 1-phosphate: step 5/6. Its function is as follows. Catalyzes 2 different reactions between oxygen and the acireductone 1,2-dihydroxy-3-keto-5-methylthiopentene (DHK-MTPene) depending upon the metal bound in the active site. Fe-containing acireductone dioxygenase (Fe-ARD) produces formate and 2-keto-4-methylthiobutyrate (KMTB), the alpha-ketoacid precursor of methionine in the methionine recycle pathway. Ni-containing acireductone dioxygenase (Ni-ARD) produces methylthiopropionate, carbon monoxide and formate, and does not lie on the methionine recycle pathway. The chain is Acireductone dioxygenase from Phaeosphaeria nodorum (strain SN15 / ATCC MYA-4574 / FGSC 10173) (Glume blotch fungus).